The primary structure comprises 287 residues: Putative esterase/lipase HI_0193 (287 aa).

One can recognise an AB hydrolase-1 domain in the interval 47–273 (PVLIFIHGLF…SGHWVHAEKP (227 aa)). Catalysis depends on residues Ser119 and His266.

It belongs to the DmpD/TodF/XylF esterase family.

The protein is Putative esterase/lipase HI_0193 of Haemophilus influenzae (strain ATCC 51907 / DSM 11121 / KW20 / Rd).